The primary structure comprises 152 residues: Nucleoside diphosphate kinase (152 aa).

Residues K11, F59, R87, T93, R104, and N114 each coordinate ATP. Catalysis depends on H117, which acts as the Pros-phosphohistidine intermediate.

The protein belongs to the NDK family. As to quaternary structure, homotetramer. It depends on Mg(2+) as a cofactor.

Its subcellular location is the cytoplasm. The catalysed reaction is dZDP + ATP = dZTP + ADP. The enzyme catalyses a 2'-deoxyribonucleoside 5'-diphosphate + ATP = a 2'-deoxyribonucleoside 5'-triphosphate + ADP. It catalyses the reaction a ribonucleoside 5'-diphosphate + ATP = a ribonucleoside 5'-triphosphate + ADP. Its pathway is purine metabolism. Major role in the synthesis of nucleoside triphosphates other than ATP. The ATP gamma phosphate is transferred to the NDP beta phosphate via a ping-pong mechanism, using a phosphorylated active-site intermediate. Its function is as follows. (Microbial infection) Catalyzes the phosphorylation of dZDP to dZTP, when the bacterium is infected by a phage that produces the substrate for the synthesis of dZTP (2- amino-2'-deoxyadenosine 5'-triphosphate), which is then used by the phage as a DNA polymerase substrate. This is Nucleoside diphosphate kinase from Synechococcus sp. (strain WH7803).